Here is a 485-residue protein sequence, read N- to C-terminus: Cysteine--tRNA ligase (485 aa).

Cysteine 27 is a binding site for Zn(2+). The short motif at 29–39 (ITAYDLCHIGH) is the 'HIGH' region element. The Zn(2+) site is built by cysteine 208, histidine 233, and glutamate 237. The 'KMSKS' region motif lies at 265–269 (KMSKS). Lysine 268 serves as a coordination point for ATP.

The protein belongs to the class-I aminoacyl-tRNA synthetase family. As to quaternary structure, monomer. Zn(2+) serves as cofactor.

Its subcellular location is the cytoplasm. It carries out the reaction tRNA(Cys) + L-cysteine + ATP = L-cysteinyl-tRNA(Cys) + AMP + diphosphate. The protein is Cysteine--tRNA ligase of Maridesulfovibrio salexigens (strain ATCC 14822 / DSM 2638 / NCIMB 8403 / VKM B-1763) (Desulfovibrio salexigens).